Here is a 341-residue protein sequence, read N- to C-terminus: S-adenosylmethionine:tRNA ribosyltransferase-isomerase (341 aa).

It belongs to the QueA family. As to quaternary structure, monomer.

The protein resides in the cytoplasm. It carries out the reaction 7-aminomethyl-7-carbaguanosine(34) in tRNA + S-adenosyl-L-methionine = epoxyqueuosine(34) in tRNA + adenine + L-methionine + 2 H(+). Its pathway is tRNA modification; tRNA-queuosine biosynthesis. Transfers and isomerizes the ribose moiety from AdoMet to the 7-aminomethyl group of 7-deazaguanine (preQ1-tRNA) to give epoxyqueuosine (oQ-tRNA). The polypeptide is S-adenosylmethionine:tRNA ribosyltransferase-isomerase (Staphylococcus saprophyticus subsp. saprophyticus (strain ATCC 15305 / DSM 20229 / NCIMB 8711 / NCTC 7292 / S-41)).